The following is a 538-amino-acid chain: Beta-1,4-mannosyl-glycoprotein 4-beta-N-acetylglucosaminyltransferase (538 aa).

At 1–7 the chain is on the cytoplasmic side; sequence MKMRRYK. A helical; Signal-anchor for type II membrane protein transmembrane segment spans residues 8-23; the sequence is LFLMFCMAGLCLISFL. The Lumenal portion of the chain corresponds to 24–538; it reads HFFKTLSYVT…VRGKLDTAEG (515 aa). Residues 120–161 are disordered; sequence PGTRMLEKPSPGRTEEKTEVSEGSSARGPARRPMRHVLSSRE. Residues Asn245, Asn263, and Asn401 are each glycosylated (N-linked (GlcNAc...) asparagine). Positions 507 to 538 are disordered; sequence REPKSTVEGGRQNQGSDGRSSAVRGKLDTAEG.

Belongs to the glycosyltransferase 17 family. As to quaternary structure, interacts with MGAT4D. As to expression, highly expressed in brain and kidney and to a much lesser extent in stomach, heart, intestine, uterus, testis, ovary and lung. Not present in spleen, liver and muscle. In brain, expressed in neurons of hippocampus.

It localises to the golgi apparatus membrane. It catalyses the reaction N(4)-{beta-D-GlcNAc-(1-&gt;2)-alpha-D-Man-(1-&gt;3)-[beta-D-GlcNAc-(1-&gt;2)-alpha-D-Man-(1-&gt;6)]-beta-D-Man-(1-&gt;4)-beta-D-GlcNAc-(1-&gt;4)-beta-D-GlcNAc}-L-asparaginyl-[protein] + UDP-N-acetyl-alpha-D-glucosamine = N(4)-{beta-D-GlcNAc-(1-&gt;2)-alpha-D-Man-(1-&gt;3)-[beta-D-GlcNAc-(1-&gt;4)]-[beta-D-GlcNAc-(1-&gt;2)-alpha-D-Man-(1-&gt;6)]-beta-D-Man-(1-&gt;4)-beta-D-GlcNAc-(1-&gt;4)-beta-D-GlcNAc}-L-asparaginyl-[protein] + UDP + H(+). The protein operates within protein modification; protein glycosylation. It is involved in the regulation of the biosynthesis and biological function of glycoprotein oligosaccharides. Catalyzes the addition of N-acetylglucosamine in beta 1-4 linkage to the beta-linked mannose of the trimannosyl core of N-linked sugar chains, called bisecting N-acetylglucosamine (GlcNAc). It is one of the most important enzymes involved in the regulation of the biosynthesis of glycoprotein oligosaccharides. The addition of this bisecting GlcNAc residue alters not only the composition, but also the conformation of the N-glycan. The introduction of the bisecting GlcNAc residue results in the suppression of further processing and elongation of N-glycans, precluding the formation of beta-1,6 GlcNAc branching, catalyzed by MGAT5 since it is unable to use the bisected oligosaccharide as a substrate. Addition of bisecting N-acetylglucosamine to CDH1/E-cadherin modulates CDH1 cell membrane location. Inhibits NeuAc-alpha-2,3-Gal-beta-1,4-GlcNAc- formation which modulates sialylation levels and plays a role in cell migration regulation. In brain, addition of bisecting N-acetylglucosamine to BACE1 blocks its lysosomal targeting in response to oxidative stress and further degradation which increases its location to early endosome and the APP cleavage. The chain is Beta-1,4-mannosyl-glycoprotein 4-beta-N-acetylglucosaminyltransferase from Mus musculus (Mouse).